Here is a 527-residue protein sequence, read N- to C-terminus: Protein PyrBI (527 aa).

The interval 1 to 342 is aspartate carbamoyltransferase; that stretch reads MKRDFLGRTL…MFGGALEAPF (342 aa). Positions 343–357 are linker; that stretch reads DTSKKEEKPEEDFII. Residues 368–527 form an aspartate carbamoyltransferase regulatory region region; that stretch reads VQKEGKRGIK…PHSFEEIWSI (160 aa). Residues cysteine 483, cysteine 488, cysteine 512, and cysteine 515 each contribute to the Zn(2+) site.

This sequence in the N-terminal section; belongs to the aspartate/ornithine carbamoyltransferase superfamily. ATCase family. It in the C-terminal section; belongs to the PyrI family.

The enzyme catalyses carbamoyl phosphate + L-aspartate = N-carbamoyl-L-aspartate + phosphate + H(+). The protein operates within pyrimidine metabolism; UMP biosynthesis via de novo pathway; (S)-dihydroorotate from bicarbonate: step 2/3. The polypeptide is Protein PyrBI (pyrBI) (Thermotoga maritima (strain ATCC 43589 / DSM 3109 / JCM 10099 / NBRC 100826 / MSB8)).